A 191-amino-acid chain; its full sequence is Guanylate kinase (191 aa).

Residues 6–184 (GLIIILSSPS…TIQQIHTIIL (179 aa)) enclose the Guanylate kinase-like domain. 13–20 (SPSGAGKS) provides a ligand contact to ATP.

Belongs to the guanylate kinase family.

It is found in the cytoplasm. It carries out the reaction GMP + ATP = GDP + ADP. Essential for recycling GMP and indirectly, cGMP. This Rickettsia bellii (strain RML369-C) protein is Guanylate kinase.